Reading from the N-terminus, the 694-residue chain is Elongation factor G (694 aa).

One can recognise a tr-type G domain in the interval 8–287 (EDYRNFGIMA…AVVEFLPAPT (280 aa)). GTP is bound by residues 17–24 (AHIDAGKT), 86–90 (DTPGH), and 140–143 (NKMD).

This sequence belongs to the TRAFAC class translation factor GTPase superfamily. Classic translation factor GTPase family. EF-G/EF-2 subfamily.

It is found in the cytoplasm. In terms of biological role, catalyzes the GTP-dependent ribosomal translocation step during translation elongation. During this step, the ribosome changes from the pre-translocational (PRE) to the post-translocational (POST) state as the newly formed A-site-bound peptidyl-tRNA and P-site-bound deacylated tRNA move to the P and E sites, respectively. Catalyzes the coordinated movement of the two tRNA molecules, the mRNA and conformational changes in the ribosome. This Brucella anthropi (strain ATCC 49188 / DSM 6882 / CCUG 24695 / JCM 21032 / LMG 3331 / NBRC 15819 / NCTC 12168 / Alc 37) (Ochrobactrum anthropi) protein is Elongation factor G.